Reading from the N-terminus, the 614-residue chain is Heat shock protein SSB1 (614 aa).

Positions 1–392 (MSTEVYDGAI…ILSGKATSAE (392 aa)) are nucleotide binding domain (NBD). Residues 16 to 18 (TTY), Lys-74, 206 to 208 (GGT), 272 to 279 (ERAKRTLS), and Gly-343 each bind ATP. Residues 393–403 (TADLLLLDVVP) are inter-domain linker. Positions 404 to 614 (LSLGVAMEGN…RAVTKAMSSR (211 aa)) are substrate binding domain (SBD). A lid domain (SBDalpha) region spans residues 517 to 613 (TSEIENMISE…KRAVTKAMSS (97 aa)). The Nuclear export signal signature appears at 575 to 583 (IENTMSEAM).

This sequence belongs to the heat shock protein 70 family. In terms of assembly, interacts with HAT1 in starvation conditions.

Its subcellular location is the nucleus. The protein localises to the cytoplasm. The enzyme catalyses ATP + H2O = ADP + phosphate + H(+). Functionally, chaperone that interacts with the histone acetyltransferase HAT1 and mediates its translocation from the nucleus to the cytoplasm during germination and starvation conditions. Within the cytoplasm, HAT1 regulates autophagy via acetylation of the autophagy-related proteins ATG3 and ATG9. The chain is Heat shock protein SSB1 from Pyricularia oryzae (strain 70-15 / ATCC MYA-4617 / FGSC 8958) (Rice blast fungus).